We begin with the raw amino-acid sequence, 105 residues long: Serine protease inhibitor Kazal-type 8 (105 aa).

Positions 1-21 are cleaved as a signal peptide; it reads MKVIFSVAVLVLASSVWTSLA. 3 disulfide bridges follow: Cys-44–Cys-78, Cys-51–Cys-75, and Cys-64–Cys-96. The Kazal-like domain maps to 44–98; it reads CIKNIQLCWILSYFKVSEPICGSNQVTYEGECHLCSGILYEDRTVIKVHDGPCEH.

In terms of tissue distribution, expressed in epydiymis, in the cauda, corpus and caput.

It is found in the secreted. Probable serine protease inhibitor. The chain is Serine protease inhibitor Kazal-type 8 (Spink8) from Mus musculus (Mouse).